Reading from the N-terminus, the 492-residue chain is MTLWINGDWITGQGERRRKTNPVSAEILWQGNDANAAQVAEACQAARAAFPRWAREPFAARQAIVEKFAALLEAHKAELTEVIARETGKPRWEAATEVTAMINKIAISIKAYHARTGEQKSELVDGAATLRHRPHGVLAVFGPYNFPGHLPNGHIVPALLAGNTLIFKPSELTPWTGETVIKLWERAGLPAGVLNLVQGGRETGQALSSLDDLDGLLFTGSASTGYQLHRQLSGQPEKILALEMGGNNPLIIEDAANMDAAVHLTLQSAFITAGQRCTCARRLLVKQGAQGDAFLARLVDVAGRLQPGRWDDDPQPFIGGLISAQAAQHVMEAWRQREALGGRTLLVPRKVKEGTSLLTPGIIELTGVTDVPDEEVFGPLLNVWRYAHFDEAIRLANNTRFGLSCGLVSTDRAQFEQLLLEARAGIVNWNKPLTGAASTAPFGGVGASGNHRPSAWYAADYCAWPMASLESPELTLPATLSPGLDFSRREAV.

An NAD(+)-binding site is contributed by 220 to 225 (GSASTG). Active-site residues include Glu243 and Cys277.

It belongs to the aldehyde dehydrogenase family. AstD subfamily.

The enzyme catalyses N-succinyl-L-glutamate 5-semialdehyde + NAD(+) + H2O = N-succinyl-L-glutamate + NADH + 2 H(+). The protein operates within amino-acid degradation; L-arginine degradation via AST pathway; L-glutamate and succinate from L-arginine: step 4/5. In terms of biological role, catalyzes the NAD-dependent reduction of succinylglutamate semialdehyde into succinylglutamate. The chain is N-succinylglutamate 5-semialdehyde dehydrogenase from Salmonella schwarzengrund (strain CVM19633).